The primary structure comprises 718 residues: SANT and BTB domain regulator of class switch recombination (718 aa).

Positions 21-59 constitute an SANT domain; the sequence is DMILYPLIGIPQTINWETVARLVPGLTPKECVKRFDELK. In terms of domain architecture, BTB spans 147 to 255; sequence MVIHVCDEAK…QCIQYCHKNM (109 aa). The span at 555-576 shows a compositional bias: acidic residues; the sequence is SEEEEYTTGSEVTEDEVGDEEE. 2 disordered regions span residues 555 to 622 and 690 to 718; these read SEEE…SPFV and RASV…GRPA. A compositionally biased stretch (basic residues) spans 580–595; the sequence is KQRKKEKPKKFTKPPK. The span at 604-615 shows a compositional bias: basic and acidic residues; that stretch reads QKKEKTLEKSTS.

Belongs to the KIAA1841 family. In terms of assembly, homodimer. Interacts (via the BTB domain) with HDAC1 and NCOR2.

Negatively regulates class switch recombination or isotype switching in splenic B-cells. This is SANT and BTB domain regulator of class switch recombination from Mus musculus (Mouse).